The primary structure comprises 198 residues: Na(+)-translocating NADH-quinone reductase subunit E (198 aa).

A run of 6 helical transmembrane segments spans residues 11 to 31 (SVFI…FLAV), 35 to 55 (VSTA…SVPV), 77 to 97 (FLNF…LEMI), 110 to 130 (GIFL…SFMV), 140 to 160 (IVYG…LAGI), and 176 to 196 (LGIT…FSGV).

The protein belongs to the NqrDE/RnfAE family. As to quaternary structure, composed of six subunits; NqrA, NqrB, NqrC, NqrD, NqrE and NqrF.

It is found in the cell inner membrane. It carries out the reaction a ubiquinone + n Na(+)(in) + NADH + H(+) = a ubiquinol + n Na(+)(out) + NAD(+). Functionally, NQR complex catalyzes the reduction of ubiquinone-1 to ubiquinol by two successive reactions, coupled with the transport of Na(+) ions from the cytoplasm to the periplasm. NqrA to NqrE are probably involved in the second step, the conversion of ubisemiquinone to ubiquinol. The polypeptide is Na(+)-translocating NADH-quinone reductase subunit E (Histophilus somni (strain 2336) (Haemophilus somnus)).